A 988-amino-acid polypeptide reads, in one-letter code: Next to BRCA1 gene 1 protein (988 aa).

The region spanning 4–86 is the PB1 domain; sequence QVTLNVTFKN…NQLQMQVHEG (83 aa). Serine 117 is subject to Phosphoserine. The tract at residues 126–150 is disordered; sequence MKTTEEPAPEQCSSAPCDTDQPQDK. A ZZ-type zinc finger spans residues 213–265; the sequence is SWHIACSHCQKRIVGVRYQCSLCPSYNICEDCEAGPYTHDTNHVLLKLRRPVV. Residues cysteine 218, cysteine 221, cysteine 232, cysteine 235, cysteine 241, cysteine 244, histidine 251, and histidine 255 each coordinate Zn(2+). ATG8 family proteins-binding stretches follow at residues 543-637 and 745-756; these read ASER…PASV and ASSEDYIIILPE. At threonine 587 the chain carries Phosphothreonine. 3 positions are modified to phosphoserine: serine 591, serine 597, and serine 626. The tract at residues 611–644 is disordered; sequence ESEGAGFKAPPDSTVSAKRKAETPASVEETEEDL. 2 disordered regions span residues 768–822 and 841–900; these read MYSS…TSQP and RSAP…HHNG. Residues 795-807 show a composition bias toward basic and acidic residues; it reads TEARERLPERESQ. A compositionally biased stretch (polar residues) spans 808 to 822; it reads PQEQSISDILTTSQP. Position 860 is a phosphoserine (serine 860). In terms of domain architecture, UBA spans 935–979; sequence SEDQTTALMAHLFEMGFCDRQLNLRLLRKHNYNILQVVTELLQVN.

As to quaternary structure, homooligomer and heterooligomer. Interacts with TRIM55. Interacts with titin/TTN. Interacts with RNF29, USP8, MAP1LC3A, MAP1LC3B, MAP1LC3C, GABARAP, GABARAPL1 and GABARAPL2. Binds to ubiquitin and ubiquitinated proteins. Interacts with SQSTM1. Interacts with TAX1BP1. Interacts with IRF3; this interaction mediates autophagic degradation of IRF3. Interacts with IL12A and IL12B. Phosphorylated by GSK3A; this phosphorylation inhibits NBR1 involvement in the formation of ubiquitinated protein aggregates. As to expression, expressed in brain.

Its subcellular location is the cytoplasm. It localises to the cytoplasmic vesicle. It is found in the autophagosome. The protein localises to the lysosome. The protein resides in the myofibril. Its subcellular location is the sarcomere. It localises to the m line. Functionally, ubiquitin-binding autophagy adapter that participates in different processes including host defense or intracellular homeostasis. Possesses a double function during the selective autophagy by acting as a shuttle bringing ubiquitinated proteins to autophagosomes and also by participating in the formation of protein aggregates. Plays a role in the regulation of the innate immune response by modulating type I interferon production and targeting ubiquitinated IRF3 for autophagic degradation. In response to oxidative stress, promotes an increase in SQSTM1 levels, phosphorylation, and body formation by preventing its autophagic degradation. In turn, activates the KEAP1-NRF2/NFE2L2 antioxidant pathway. Also plays non-autophagy role by mediating the shuttle of IL-12 to late endosome for subsequent secretion. This is Next to BRCA1 gene 1 protein (Nbr1) from Mus musculus (Mouse).